A 341-amino-acid polypeptide reads, in one-letter code: Biotin synthase (341 aa).

The 220-residue stretch at 53–272 (NHVETASLLS…IAVARIMMPK (220 aa)) folds into the Radical SAM core domain. [4Fe-4S] cluster contacts are provided by C68, C72, and C75. Residues C112, C143, C203, and R276 each coordinate [2Fe-2S] cluster.

Belongs to the radical SAM superfamily. Biotin synthase family. Homodimer. It depends on [4Fe-4S] cluster as a cofactor. Requires [2Fe-2S] cluster as cofactor.

It catalyses the reaction (4R,5S)-dethiobiotin + (sulfur carrier)-SH + 2 reduced [2Fe-2S]-[ferredoxin] + 2 S-adenosyl-L-methionine = (sulfur carrier)-H + biotin + 2 5'-deoxyadenosine + 2 L-methionine + 2 oxidized [2Fe-2S]-[ferredoxin]. It functions in the pathway cofactor biosynthesis; biotin biosynthesis; biotin from 7,8-diaminononanoate: step 2/2. Its function is as follows. Catalyzes the conversion of dethiobiotin (DTB) to biotin by the insertion of a sulfur atom into dethiobiotin via a radical-based mechanism. The chain is Biotin synthase from Nitrobacter winogradskyi (strain ATCC 25391 / DSM 10237 / CIP 104748 / NCIMB 11846 / Nb-255).